Here is a 116-residue protein sequence, read N- to C-terminus: MVAAKKTKKSLESINSRLQLVMKSGKYVLGYKQSQKMIRQGKAKLVILANNCPALRKSEIEYYAMLSKTGVHHYSGNNIELGTACGKYYRVCTLAIIDPGDSDIIRSMPDQQQGEK.

This sequence belongs to the eukaryotic ribosomal protein eL30 family. Component of the large ribosomal subunit.

It localises to the cytoplasm. Functionally, component of the large ribosomal subunit. The ribosome is a large ribonucleoprotein complex responsible for the synthesis of proteins in the cell. The chain is Large ribosomal subunit protein eL30 (rpl30) from Ictalurus punctatus (Channel catfish).